Here is a 331-residue protein sequence, read N- to C-terminus: D-alanine--D-alanine ligase (331 aa).

The 207-residue stretch at 122 to 328 (KLWYDAIGIP…FHEFLADCIE (207 aa)) folds into the ATP-grasp domain. 152–207 (AFDKWGKLFVKAARQGSSVGCYSVTKIEQLSDAIDKAFGFSHQVLVEKAVKPRELE) is an ATP binding site. 3 residues coordinate Mg(2+): D282, E295, and N297.

Belongs to the D-alanine--D-alanine ligase family. Mg(2+) serves as cofactor. Requires Mn(2+) as cofactor.

The protein localises to the cytoplasm. The enzyme catalyses 2 D-alanine + ATP = D-alanyl-D-alanine + ADP + phosphate + H(+). Its pathway is cell wall biogenesis; peptidoglycan biosynthesis. Its function is as follows. Cell wall formation. The chain is D-alanine--D-alanine ligase from Vibrio vulnificus (strain CMCP6).